The following is a 103-amino-acid chain: Histone H4 (103 aa).

The segment covering 1 to 14 has biased composition (gly residues); sequence MSGRGKGGKGLGKG. The tract at residues 1–20 is disordered; sequence MSGRGKGGKGLGKGGAKRHR. Residues 17-21 mediate DNA binding; sequence KRHRK.

The protein belongs to the histone H4 family. As to quaternary structure, the nucleosome is a histone octamer containing two molecules each of H2A, H2B, H3 and H4 assembled in one H3-H4 heterotetramer and two H2A-H2B heterodimers. The octamer wraps approximately 147 bp of DNA.

Its subcellular location is the nucleus. The protein localises to the chromosome. Its function is as follows. Core component of nucleosome. Nucleosomes wrap and compact DNA into chromatin, limiting DNA accessibility to the cellular machineries which require DNA as a template. Histones thereby play a central role in transcription regulation, DNA repair, DNA replication and chromosomal stability. DNA accessibility is regulated via a complex set of post-translational modifications of histones, also called histone code, and nucleosome remodeling. The chain is Histone H4 (H41) from Physarum polycephalum (Slime mold).